A 248-amino-acid polypeptide reads, in one-letter code: 2,3-bisphosphoglycerate-dependent phosphoglycerate mutase (248 aa).

Substrate contacts are provided by residues 10-17 (RHGQSEWN), 23-24 (TG), Arg-62, 89-92 (ERHY), Lys-100, 116-117 (RR), and 183-184 (GN). Catalysis depends on His-11, which acts as the Tele-phosphohistidine intermediate. Catalysis depends on Glu-89, which acts as the Proton donor/acceptor.

The protein belongs to the phosphoglycerate mutase family. BPG-dependent PGAM subfamily.

It carries out the reaction (2R)-2-phosphoglycerate = (2R)-3-phosphoglycerate. The protein operates within carbohydrate degradation; glycolysis; pyruvate from D-glyceraldehyde 3-phosphate: step 3/5. In terms of biological role, catalyzes the interconversion of 2-phosphoglycerate and 3-phosphoglycerate. The protein is 2,3-bisphosphoglycerate-dependent phosphoglycerate mutase of Corynebacterium glutamicum (strain ATCC 13032 / DSM 20300 / JCM 1318 / BCRC 11384 / CCUG 27702 / LMG 3730 / NBRC 12168 / NCIMB 10025 / NRRL B-2784 / 534).